Here is a 279-residue protein sequence, read N- to C-terminus: Ribonuclease Z (279 aa).

Histidine 64, histidine 66, aspartate 68, histidine 69, histidine 134, aspartate 191, and histidine 245 together coordinate Zn(2+). Aspartate 68 functions as the Proton acceptor in the catalytic mechanism.

It belongs to the RNase Z family. Homodimer. The cofactor is Zn(2+).

The catalysed reaction is Endonucleolytic cleavage of RNA, removing extra 3' nucleotides from tRNA precursor, generating 3' termini of tRNAs. A 3'-hydroxy group is left at the tRNA terminus and a 5'-phosphoryl group is left at the trailer molecule.. Zinc phosphodiesterase, which displays some tRNA 3'-processing endonuclease activity. Probably involved in tRNA maturation, by removing a 3'-trailer from precursor tRNA. This chain is Ribonuclease Z, found in Methanopyrus kandleri (strain AV19 / DSM 6324 / JCM 9639 / NBRC 100938).